An 89-amino-acid polypeptide reads, in one-letter code: Small ribosomal subunit protein uS19 (89 aa).

It belongs to the universal ribosomal protein uS19 family.

Functionally, protein S19 forms a complex with S13 that binds strongly to the 16S ribosomal RNA. The protein is Small ribosomal subunit protein uS19 of Akkermansia muciniphila (strain ATCC BAA-835 / DSM 22959 / JCM 33894 / BCRC 81048 / CCUG 64013 / CIP 107961 / Muc).